The chain runs to 394 residues: 4-hydroxyphenylpyruvate dioxygenase (394 aa).

2 consecutive VOC domains span residues 18–149 (SFHH…LLEY) and 181–339 (FIDH…IFTK). Fe cation contacts are provided by His-184, His-267, and Glu-350.

This sequence belongs to the 4HPPD family. As to quaternary structure, homodimer. Fe cation is required as a cofactor.

The protein resides in the cytoplasm. Its subcellular location is the endoplasmic reticulum membrane. The protein localises to the golgi apparatus membrane. It catalyses the reaction 3-(4-hydroxyphenyl)pyruvate + O2 = homogentisate + CO2. The protein operates within amino-acid degradation; L-phenylalanine degradation; acetoacetate and fumarate from L-phenylalanine: step 3/6. In terms of biological role, catalyzes the conversion of 4-hydroxyphenylpyruvic acid to homogentisic acid, one of the steps in tyrosine catabolism. The protein is 4-hydroxyphenylpyruvate dioxygenase (hpd) of Xenopus tropicalis (Western clawed frog).